We begin with the raw amino-acid sequence, 602 residues long: uncharacterized protein (602 aa).

Residues 51-210 enclose the Helicase ATP-binding domain; that stretch reads QYLGTQPRDF…PFVSYQPDAD (160 aa). Over residues 430–439 the composition is skewed to basic and acidic residues; that stretch reads PHRESAHDPL. Disordered regions lie at residues 430–452 and 518–538; these read PHRESAHDPLDGDPATRTQTERG and RAQLQKGATQPATSGASASVH. Residues 523–534 show a composition bias toward polar residues; it reads KGATQPATSGAS.

To M.leprae ML1624.

This is an uncharacterized protein from Mycobacterium tuberculosis (strain CDC 1551 / Oshkosh).